The primary structure comprises 160 residues: Putative NrdI-like protein (160 aa).

This sequence belongs to the NrdI family.

This Streptococcus pyogenes serotype M3 (strain ATCC BAA-595 / MGAS315) protein is Putative NrdI-like protein.